Consider the following 209-residue polypeptide: Response regulator protein VraR (209 aa).

A Response regulatory domain is found at 4–120 (KVLFVDDHEM…DIADAVRKTS (117 aa)). 4-aspartylphosphate is present on Asp55. One can recognise an HTH luxR-type domain in the interval 141–206 (RAELYEMLTE…QAVIYAFQHN (66 aa)). A DNA-binding region (H-T-H motif) is located at residues 165–184 (NQEIASASHITIKTVKTHVS).

In terms of assembly, homodimer. Phosphorylated by VraS. Phosphorylation state of VraR controls dimerization of the protein.

It localises to the cytoplasm. Functionally, member of the two-component regulatory system VraS/VraR involved in the control of the cell wall peptidoglycan biosynthesis. Upon cellular stress, the histidine kinase VraS transfers the phosphoryl group onto VraR. Upon phosphorylation, VraR dimerizes at the N-terminal domain. In turn, phosphorylation-induced dimerization expands and enhances the VraR binding to its own promoter leading to increased expression and subsequent modulation of as many as 40 genes, which ultimately constitute the S.aureus response to cell wall damage. In addition, inhibits the host autophagic flux and delays the early stage of autophagosome formation, thereby promoting bacterial survival. Facilitates the ability of S.aureus to resist host polymorphonuclear leukocytes-mediated phagocytosis and killing thus contributing to immune evasion. This chain is Response regulator protein VraR (vraR), found in Staphylococcus aureus (strain Mu3 / ATCC 700698).